A 345-amino-acid polypeptide reads, in one-letter code: Centromere protein U (345 aa).

2 stretches are compositionally biased toward basic residues: residues 1–10 (MSSKKRTKRN) and 19–29 (HKGRSHPRRKF). Disordered regions lie at residues 1–37 (MSSK…EPDV) and 64–153 (AVDA…SSVQ). Over residues 88 to 106 (NAERSEKMLLETPEGDVHE) the composition is skewed to basic and acidic residues. Positions 142–152 (SDSSVNSPSSV) are enriched in low complexity. The stretch at 201–294 (CSAFEDQVTD…QDYLDYREEN (94 aa)) forms a coiled coil. The short motif at 222-239 (KKKNAKVVADIKKKRQRL) is the Nuclear localization signal element.

The protein belongs to the CENP-U/AME1 family. Interacts with CENPH-CENPI complex at the kinetochore.

The protein localises to the nucleus. It is found in the chromosome. The protein resides in the centromere. Probable component of a centromeric complex involved in assembly of kinetochore proteins, mitotic progression and chromosome segregation. Required for maintenance of sister chromatid adhesion during mitotic checkpoint activation. The chain is Centromere protein U (CENPU) from Gallus gallus (Chicken).